Here is a 349-residue protein sequence, read N- to C-terminus: tRNA N6-adenosine threonylcarbamoyltransferase (349 aa).

Residues His-111 and His-115 each contribute to the Fe cation site. Substrate-binding positions include Leu-134–Gly-138, Asp-167, Gly-180, Asp-184, and Asn-279. Asp-307 contributes to the Fe cation binding site.

It belongs to the KAE1 / TsaD family. Requires Fe(2+) as cofactor.

It is found in the cytoplasm. The enzyme catalyses L-threonylcarbamoyladenylate + adenosine(37) in tRNA = N(6)-L-threonylcarbamoyladenosine(37) in tRNA + AMP + H(+). In terms of biological role, required for the formation of a threonylcarbamoyl group on adenosine at position 37 (t(6)A37) in tRNAs that read codons beginning with adenine. Is involved in the transfer of the threonylcarbamoyl moiety of threonylcarbamoyl-AMP (TC-AMP) to the N6 group of A37, together with TsaE and TsaB. TsaD likely plays a direct catalytic role in this reaction. This Nostoc punctiforme (strain ATCC 29133 / PCC 73102) protein is tRNA N6-adenosine threonylcarbamoyltransferase.